A 482-amino-acid chain; its full sequence is Ubiquitin carboxyl-terminal hydrolase MINDY-1 (482 aa).

The interval 1–119 (MEQPQAECPA…RPQQLPQSPR (119 aa)) is disordered. Over residues 21–66 (ESEKHEALSGPEKHPQDKDGADAAPEKHPQDKDGADAHGEAGKQKS) the composition is skewed to basic and acidic residues. The segment covering 82 to 94 (CPPPEASSSPPGP) has biased composition (pro residues). Over residues 106–119 (EACSRPQQLPQSPR) the composition is skewed to polar residues. At serine 117 the chain carries Phosphoserine. Cysteine 151 acts as the Nucleophile in catalysis. Residue histidine 333 is the Proton acceptor of the active site. The interval 402–441 (QVDQDYLIALSLQQQQQPQGMLGLSDLELAQQLQQEEYQQ) is ubiquitin-binding domain (UBD). Residues 437–446 (EEYQQQQAVQ) are compositionally biased toward low complexity. Residues 437–482 (EEYQQQQAVQPVRTRAPSSPGRGATSGRPAGERRQRSKTESDCVLL) are disordered. The residue at position 454 (serine 454) is a Phosphoserine. Positions 466-482 (AGERRQRSKTESDCVLL) are enriched in basic and acidic residues.

This sequence belongs to the MINDY deubiquitinase family. FAM63 subfamily.

The catalysed reaction is Thiol-dependent hydrolysis of ester, thioester, amide, peptide and isopeptide bonds formed by the C-terminal Gly of ubiquitin (a 76-residue protein attached to proteins as an intracellular targeting signal).. Hydrolase that can specifically remove 'Lys-48'-linked conjugated ubiquitin from proteins. Has exodeubiquitinase activity and has a preference for long polyubiquitin chains. May play a regulatory role at the level of protein turnover. This chain is Ubiquitin carboxyl-terminal hydrolase MINDY-1 (Mindy1), found in Rattus norvegicus (Rat).